The following is a 63-amino-acid chain: Prokaryotic ubiquitin-like protein Pup (63 aa).

The interval 1–28 is disordered; the sequence is MPQEFEQIRSADQPLDSEESAPVAGART. The tract at residues 19 to 57 is ARC ATPase binding; that stretch reads ESAPVAGARTDDTVDALDAVLDDIESVLETNAEEYVGSF. Glu63 is covalently cross-linked (Isoglutamyl lysine isopeptide (Glu-Lys) (interchain with K-? in acceptor proteins)).

It belongs to the prokaryotic ubiquitin-like protein family. In terms of assembly, strongly interacts with the proteasome-associated ATPase ARC through a hydrophobic interface; the interacting region of Pup lies in its C-terminal half. There is one Pup binding site per ARC hexamer ring.

It functions in the pathway protein degradation; proteasomal Pup-dependent pathway. In terms of biological role, protein modifier that is covalently attached to lysine residues of substrate proteins, thereby targeting them for proteasomal degradation. The tagging system is termed pupylation. The chain is Prokaryotic ubiquitin-like protein Pup from Bifidobacterium dentium (strain ATCC 27534 / DSM 20436 / JCM 1195 / Bd1).